Consider the following 718-residue polypeptide: Potassium channel KAT1 (718 aa).

Over M1 to E60 the chain is Cytoplasmic. A helical transmembrane segment spans residues L61 to L81. Residues R82–L88 lie on the Extracellular side of the membrane. The helical transmembrane segment at L89–V109 threads the bilayer. Residues A110–S132 are Cytoplasmic-facing. The chain crosses the membrane as a helical span at residues T133–T153. Topologically, residues H154–K162 are extracellular. The chain crosses the membrane as a helical; Voltage-sensor span at residues V163–E183. Over K184–K197 the chain is Cytoplasmic. The helical transmembrane segment at L198 to D218 threads the bilayer. Over R219 to I245 the chain is Extracellular. An intramembrane region (pore-forming) is located at residues T246 to A265. Topologically, residues E266 to T269 are extracellular. Residues E270 to G290 traverse the membrane as a helical segment. Residues N291 to M718 are Cytoplasmic-facing. Position 374–493 (L374–K493) interacts with a nucleoside 3',5'-cyclic phosphate. The segment at E560–V584 is disordered. Over residues T562 to M574 the composition is skewed to polar residues. Residues T575 to V584 are compositionally biased toward basic and acidic residues. One can recognise a KHA domain in the interval R647–M718.

It belongs to the potassium channel family. Plant (TC 1.A.1.4) subfamily.

It is found in the membrane. In terms of biological role, probable inward-rectifying potassium channel. Assuming opened or closed conformations in response to the voltage difference across the membrane, the channel is activated by hyperpolarization. This chain is Potassium channel KAT1, found in Oryza sativa subsp. japonica (Rice).